The chain runs to 243 residues: UPF0502 protein RALTA_B0914 (243 aa).

Positions 1–10 are enriched in polar residues; it reads MPSTPESDPT. The disordered stretch occupies residues 1–23; sequence MPSTPESDPTQPGDRPARPALRP.

This sequence belongs to the UPF0502 family.

In Cupriavidus taiwanensis (strain DSM 17343 / BCRC 17206 / CCUG 44338 / CIP 107171 / LMG 19424 / R1) (Ralstonia taiwanensis (strain LMG 19424)), this protein is UPF0502 protein RALTA_B0914.